The sequence spans 226 residues: LexA repressor (226 aa).

A DNA-binding region (H-T-H motif) is located at residues 28-48 (RAEICQSLGFRSPNAAESHLR). Catalysis depends on for autocatalytic cleavage activity residues Ser133 and Lys170.

This sequence belongs to the peptidase S24 family. As to quaternary structure, homodimer.

It carries out the reaction Hydrolysis of Ala-|-Gly bond in repressor LexA.. Its function is as follows. Represses a number of genes involved in the response to DNA damage (SOS response), including recA and lexA. In the presence of single-stranded DNA, RecA interacts with LexA causing an autocatalytic cleavage which disrupts the DNA-binding part of LexA, leading to derepression of the SOS regulon and eventually DNA repair. The chain is LexA repressor from Halorhodospira halophila (strain DSM 244 / SL1) (Ectothiorhodospira halophila (strain DSM 244 / SL1)).